Reading from the N-terminus, the 119-residue chain is Large ribosomal subunit protein uL18 (119 aa).

A disordered region spans residues 1–23 (MSQVDKAARRQKIKDRSRVSVQG).

It belongs to the universal ribosomal protein uL18 family. Part of the 50S ribosomal subunit; part of the 5S rRNA/L5/L18/L25 subcomplex. Contacts the 5S and 23S rRNAs.

Functionally, this is one of the proteins that bind and probably mediate the attachment of the 5S RNA into the large ribosomal subunit, where it forms part of the central protuberance. This chain is Large ribosomal subunit protein uL18, found in Chlorobium chlorochromatii (strain CaD3).